A 770-amino-acid polypeptide reads, in one-letter code: MTLAKIELLKQLLRDNEAKTVLRQTTVDQYNIIRKFNTSRIEKNPSLRMKWAMCSNFPLALTKGDMANRIPLEYKGIQLKTNAEDIGTKGQMCSIAAVTWWNTYGPIGDTEGFEKVYESFFLRKMRLDNATWGRITFGPVERVRKRVLLNPLTKEMPPDEASNVIMEILFPKEAGIPRESTWIHRELIKEKREKLKGTMITPIVLAYMLERELVARRRFLPVAGATSAEFIEMLHCLQGENWRQIYHPGGNKLTESRSQSMIVACRKIIRRSIVASNPLELAVEIANKTVIDTEPLKSCLAALDGGDVACDIIRAALGLKIRQRQRFGRLELKRISGRGFKNDEEILIGNGTIQKIGIWDGEEEFHVRCGECRGILKKSQMRMEKLLINSAKKEDMKDLIILCMVFSQDTRMFQGVRGEINFLNRAGQLLSPMYQLQRYFLNRSNDLFDQWGYEESPKASELHGINELMNASDYTLKGVVVTKNVIDDFSSTETEKVSITKNLSLIKRTGEVIMGANDVSELESQAQLMITYDTPKMWEMGTTKELVQNTYQWVLKNLVTLKAQFLLGKEDMFQWDAFEAFESIIPQKMAGQYSGFARAVLKQMRDQEVMKTDQFIKLLPFCFSPPKLRSNGEPYQFLRLMLKGGGENFIEVRKGSPLFSYNPQTEILTICGRMMSLKGKIEDEERNRSMGNAVLAGFLVSGKYDPDLGDFKTIEELERLKPGEKANILLYQGKPVKVVKRKRYSALSNDISQGIKRQRMTVESMGWALS.

A Nuclear localization signal motif is present at residues 740–743 (KRKR).

The protein belongs to the influenza viruses PB2 family. As to quaternary structure, influenza RNA polymerase is composed of three subunits: PB1, PB2 and PA. Interacts (via N-terminus) with PB1 (via C-terminus). Interacts with nucleoprotein NP (via N-terminus). Interacts with host ANP32A (via C-terminus) and ANP32B; these interactions promote viral RNA synthesis.

The protein localises to the virion. Its subcellular location is the host nucleus. Functionally, plays an essential role in transcription initiation and cap-stealing mechanism, in which cellular capped pre-mRNAs are used to generate primers for viral transcription. Recognizes and binds a wide range of cap structures of target pre-RNAs which are subsequently cleaved after 10-13 nucleotides by the viral protein PA. Plays a role in the initiation of the viral genome replication and modulates the activity of the ribonucleoprotein (RNP) complex. The protein is Polymerase basic protein 2 of Influenza B virus (strain B/Lee/1940).